The sequence spans 116 residues: Large ribosomal subunit protein bL20 (116 aa).

It belongs to the bacterial ribosomal protein bL20 family.

Functionally, binds directly to 23S ribosomal RNA and is necessary for the in vitro assembly process of the 50S ribosomal subunit. It is not involved in the protein synthesizing functions of that subunit. The chain is Large ribosomal subunit protein bL20 from Desulfatibacillum aliphaticivorans.